A 256-amino-acid chain; its full sequence is Thiazole synthase (256 aa).

The active-site Schiff-base intermediate with DXP is Lys95. 1-deoxy-D-xylulose 5-phosphate contacts are provided by residues Gly156, 182–183, and 204–205; these read AG and NT.

The protein belongs to the ThiG family. Homotetramer. Forms heterodimers with either ThiH or ThiS.

The protein localises to the cytoplasm. The catalysed reaction is [ThiS sulfur-carrier protein]-C-terminal-Gly-aminoethanethioate + 2-iminoacetate + 1-deoxy-D-xylulose 5-phosphate = [ThiS sulfur-carrier protein]-C-terminal Gly-Gly + 2-[(2R,5Z)-2-carboxy-4-methylthiazol-5(2H)-ylidene]ethyl phosphate + 2 H2O + H(+). It functions in the pathway cofactor biosynthesis; thiamine diphosphate biosynthesis. In terms of biological role, catalyzes the rearrangement of 1-deoxy-D-xylulose 5-phosphate (DXP) to produce the thiazole phosphate moiety of thiamine. Sulfur is provided by the thiocarboxylate moiety of the carrier protein ThiS. In vitro, sulfur can be provided by H(2)S. This chain is Thiazole synthase, found in Citrobacter koseri (strain ATCC BAA-895 / CDC 4225-83 / SGSC4696).